Reading from the N-terminus, the 267-residue chain is MASVTEHAQWGVGCLPPLNVDKQAIAAAFSRAAESYDSAANLQRETGHRLVQLGQQHTGFVVLDAGCGTGHFSQHWRLLGKRVIALDLAAGMLDYARQQQVADDYLLGDIEHIPLPDQSVDICFSNLAVQWCSDLGAALSEFYRVTRPGGIILFSTLAEGSLDELGQAWQQVDGQRHVNDFLPLQHIQTACQYYRHHLTTALYQPRFPNVIALMRSLQGIGATHLHHGRQAGLQGRQRLAALQRAYVMQSGGYPLSYHMVYGVIYRD.

Belongs to the methyltransferase superfamily.

It catalyses the reaction malonyl-[ACP] + S-adenosyl-L-methionine = malonyl-[ACP] methyl ester + S-adenosyl-L-homocysteine. It participates in cofactor biosynthesis; biotin biosynthesis. Functionally, converts the free carboxyl group of a malonyl-thioester to its methyl ester by transfer of a methyl group from S-adenosyl-L-methionine (SAM). It allows to synthesize pimeloyl-ACP via the fatty acid synthetic pathway. This chain is Malonyl-[acyl-carrier protein] O-methyltransferase, found in Yersinia pestis.